Consider the following 257-residue polypeptide: Transmembrane protein 101 (257 aa).

Transmembrane regions (helical) follow at residues 21–40 (VLLT…LYAE), 52–72 (VPYL…MSFG), 77–97 (WFAL…YVGG), 110–130 (YSRT…AGEL), 139–159 (SLQS…AYSL), 182–202 (LFFV…YVTL), 206–226 (ILAV…AYWH), and 233–253 (FWNQ…AVIL).

The protein localises to the membrane. Functionally, may activate NF-kappa-B signaling pathways. This Bos taurus (Bovine) protein is Transmembrane protein 101 (TMEM101).